We begin with the raw amino-acid sequence, 196 residues long: Cell division protein SepF (196 aa).

A disordered region spans residues 16 to 81 (EDDEEFNEPA…KRAGSTFTKP (66 aa)). Polar residues predominate over residues 56–69 (RPAQSTSKAQTQTA).

This sequence belongs to the SepF family. As to quaternary structure, homodimer. Interacts with FtsZ.

The protein resides in the cytoplasm. In terms of biological role, cell division protein that is part of the divisome complex and is recruited early to the Z-ring. Probably stimulates Z-ring formation, perhaps through the cross-linking of FtsZ protofilaments. Its function overlaps with FtsA. The protein is Cell division protein SepF of Lactococcus lactis subsp. lactis (strain IL1403) (Streptococcus lactis).